Here is a 309-residue protein sequence, read N- to C-terminus: Porphobilinogen deaminase (309 aa).

C242 is modified (S-(dipyrrolylmethanemethyl)cysteine).

It belongs to the HMBS family. Monomer. Dipyrromethane is required as a cofactor.

It catalyses the reaction 4 porphobilinogen + H2O = hydroxymethylbilane + 4 NH4(+). It functions in the pathway porphyrin-containing compound metabolism; protoporphyrin-IX biosynthesis; coproporphyrinogen-III from 5-aminolevulinate: step 2/4. In terms of biological role, tetrapolymerization of the monopyrrole PBG into the hydroxymethylbilane pre-uroporphyrinogen in several discrete steps. This is Porphobilinogen deaminase from Legionella pneumophila (strain Paris).